A 202-amino-acid chain; its full sequence is Nucleoside triphosphate pyrophosphatase (202 aa).

The Proton acceptor role is filled by Asp-79.

The protein belongs to the Maf family. It depends on a divalent metal cation as a cofactor.

The protein resides in the cytoplasm. The catalysed reaction is a ribonucleoside 5'-triphosphate + H2O = a ribonucleoside 5'-phosphate + diphosphate + H(+). It catalyses the reaction a 2'-deoxyribonucleoside 5'-triphosphate + H2O = a 2'-deoxyribonucleoside 5'-phosphate + diphosphate + H(+). Nucleoside triphosphate pyrophosphatase. May have a dual role in cell division arrest and in preventing the incorporation of modified nucleotides into cellular nucleic acids. In Rhodopseudomonas palustris (strain BisB5), this protein is Nucleoside triphosphate pyrophosphatase.